A 505-amino-acid polypeptide reads, in one-letter code: Retinoic acid receptor gamma (505 aa).

2 disordered regions span residues 1–57 (MMKF…SSKD) and 113–134 (SLSV…PSPP). Basic and acidic residues-rich tracts occupy residues 12–22 (DGGERPEEEGK) and 32–46 (MGKE…KEEA). The tract at residues 52–142 (MSSSKDRICS…PPPPPRVYKP (91 aa)) is modulating. Polar residues predominate over residues 115 to 124 (SVETQSTSSE). NR C4-type zinc fingers lie at residues 143–163 (CFVC…CEGC) and 179–203 (CHRD…LQKC). Positions 143–208 (CFVCNDKSSG…RLQKCFEVGM (66 aa)) form a DNA-binding region, nuclear receptor. Residues 209 to 237 (SKEAVRNDRNKKKKEIKEEVVTDSYEMPP) form a hinge region. In terms of domain architecture, NR LBD spans 238-472 (EMEALIQKVS…PLIREMLENP (235 aa)). Positions 462–505 (PPLIREMLENPEAFEDDASPPPKSEQKPIKVEEKPGEKTSTKDP) are disordered. Over residues 485-505 (SEQKPIKVEEKPGEKTSTKDP) the composition is skewed to basic and acidic residues.

Belongs to the nuclear hormone receptor family. NR1 subfamily. Heterodimer; with a RXR molecule. Binds DNA preferentially as a RAR/RXR heterodimer. As to expression, isoform Delta-1A and Isoform Delta-1B are most abundant in regenerating limbs, tails, and the anterior half of the lower jaw. Isoform Delta-2 is broadly and uniformly distributed.

The protein resides in the nucleus. In terms of biological role, receptor for retinoic acid. Retinoic acid receptors bind as heterodimers to their target response elements in response to their ligands, all-trans or 9-cis retinoic acid, and regulate gene expression in various biological processes. The RAR/RXR heterodimers bind to the retinoic acid response elements (RARE) composed of tandem 5'-AGGTCA-3' sites known as DR1-DR5. The chain is Retinoic acid receptor gamma (RARG) from Notophthalmus viridescens (Eastern newt).